The following is an 86-amino-acid chain: Large ribosomal subunit protein uL23 (86 aa).

This sequence belongs to the universal ribosomal protein uL23 family. In terms of assembly, part of the 50S ribosomal subunit. Contacts protein L29.

Its function is as follows. Binds to 23S rRNA. One of the proteins that surrounds the polypeptide exit tunnel on the outside of the ribosome. This is Large ribosomal subunit protein uL23 from Methanococcus vannielii (strain ATCC 35089 / DSM 1224 / JCM 13029 / OCM 148 / SB).